The following is a 249-amino-acid chain: 3-deoxy-manno-octulosonate cytidylyltransferase (249 aa).

The protein belongs to the KdsB family.

It localises to the cytoplasm. The enzyme catalyses 3-deoxy-alpha-D-manno-oct-2-ulosonate + CTP = CMP-3-deoxy-beta-D-manno-octulosonate + diphosphate. It participates in nucleotide-sugar biosynthesis; CMP-3-deoxy-D-manno-octulosonate biosynthesis; CMP-3-deoxy-D-manno-octulosonate from 3-deoxy-D-manno-octulosonate and CTP: step 1/1. The protein operates within bacterial outer membrane biogenesis; lipopolysaccharide biosynthesis. In terms of biological role, activates KDO (a required 8-carbon sugar) for incorporation into bacterial lipopolysaccharide in Gram-negative bacteria. The sequence is that of 3-deoxy-manno-octulosonate cytidylyltransferase from Aliivibrio fischeri (strain ATCC 700601 / ES114) (Vibrio fischeri).